Reading from the N-terminus, the 106-residue chain is ATP-dependent Clp protease adapter protein ClpS (106 aa).

This sequence belongs to the ClpS family. In terms of assembly, binds to the N-terminal domain of the chaperone ClpA.

Involved in the modulation of the specificity of the ClpAP-mediated ATP-dependent protein degradation. The sequence is that of ATP-dependent Clp protease adapter protein ClpS from Vibrio campbellii (strain ATCC BAA-1116).